We begin with the raw amino-acid sequence, 38 residues long: Large ribosomal subunit protein bL36 (38 aa).

Belongs to the bacterial ribosomal protein bL36 family.

The protein is Large ribosomal subunit protein bL36 of Sorangium cellulosum (strain So ce56) (Polyangium cellulosum (strain So ce56)).